The chain runs to 173 residues: MPSNQNRDNFIDKAFTVIAESIVKIMPIAEKEKKAYIYYRDGLAAQNNGDYSEALEYYKESLLLEENKIDRGETLKNMAIIYMSNGEEDLSIETYEKALVENPKQPSCLKNIGLIYEKRGRNAEQNGDLDQRDIWFDKAAEVWSKAVRLYPGGYLDIENWLKNSGRSSIDMYL.

TPR repeat units lie at residues 35 to 68 (AYIYYRDGLAAQNNGDYSEALEYYKESLLLEENK), 72 to 105 (GETLKNMAIIYMSNGEEDLSIETYEKALVENPKQ), and 120 to 153 (GRNAEQNGDLDQRDIWFDKAAEVWSKAVRLYPGG).

It belongs to the Ycf3 family.

It is found in the cellular thylakoid membrane. Functionally, essential for the assembly of the photosystem I (PSI) complex. May act as a chaperone-like factor to guide the assembly of the PSI subunits. This Prochlorococcus marinus (strain MIT 9301) protein is Photosystem I assembly protein Ycf3.